We begin with the raw amino-acid sequence, 605 residues long: IQ domain-containing protein IQM2 (605 aa).

One can recognise an IQ domain in the interval 105–134 (KHEAAIKLQKVYKSFRTRRKLADCAVLVEQ). Positions 408–505 (QDKVDPSGEE…EEGETKESEV (98 aa)) are disordered. Over residues 425-440 (SISRKQSDLETPEKME) the composition is skewed to basic and acidic residues. Over residues 462-480 (DYDSGDDEEEEEEMFELEQ) the composition is skewed to acidic residues. A compositionally biased stretch (low complexity) spans 481–490 (ESMPSEQSSP). Over residues 491–505 (RGEEKEEGETKESEV) the composition is skewed to basic and acidic residues.

As to expression, expressed in rosette and cauline leaves, stems, flowers and siliques, and at lower levels in roots.

Its subcellular location is the cytoplasm. It localises to the nucleus. In terms of biological role, may be involved in biotic and abiotic stress responses. The protein is IQ domain-containing protein IQM2 of Arabidopsis thaliana (Mouse-ear cress).